Consider the following 122-residue polypeptide: Large ribosomal subunit protein bL12 (122 aa).

Belongs to the bacterial ribosomal protein bL12 family. In terms of assembly, homodimer. Part of the ribosomal stalk of the 50S ribosomal subunit. Forms a multimeric L10(L12)X complex, where L10 forms an elongated spine to which 2 to 4 L12 dimers bind in a sequential fashion. Binds GTP-bound translation factors.

Its function is as follows. Forms part of the ribosomal stalk which helps the ribosome interact with GTP-bound translation factors. Is thus essential for accurate translation. The polypeptide is Large ribosomal subunit protein bL12 (Staphylococcus aureus (strain Newman)).